The following is a 175-amino-acid chain: Sec-independent protein translocase protein TatB (175 aa).

Residues 1-21 form a helical membrane-spanning segment; that stretch reads MLDLGLSKMALIGVVALVVLG. Over residues 96–115 the composition is skewed to low complexity; the sequence is VSPGGSAAADAPDGPSAASG. Disordered stretches follow at residues 96-119 and 152-175; these read VSPG…EPSW and QVQS…ARFL. Residues 160–175 are compositionally biased toward basic residues; that stretch reads VARHRPASLRRPARFL.

The protein belongs to the TatB family. In terms of assembly, the Tat system comprises two distinct complexes: a TatABC complex, containing multiple copies of TatA, TatB and TatC subunits, and a separate TatA complex, containing only TatA subunits. Substrates initially bind to the TatABC complex, which probably triggers association of the separate TatA complex to form the active translocon.

It localises to the cell inner membrane. Its function is as follows. Part of the twin-arginine translocation (Tat) system that transports large folded proteins containing a characteristic twin-arginine motif in their signal peptide across membranes. Together with TatC, TatB is part of a receptor directly interacting with Tat signal peptides. TatB may form an oligomeric binding site that transiently accommodates folded Tat precursor proteins before their translocation. The protein is Sec-independent protein translocase protein TatB of Burkholderia pseudomallei (strain 1710b).